The sequence spans 895 residues: Putative endoplasmic reticulum metallopeptidase 1-B (895 aa).

Residues 1–27 (MSTGIRRRHADEKKNILEKESLQNDET) are disordered. The Cytoplasmic segment spans residues 1-39 (MSTGIRRRHADEKKNILEKESLQNDETQREMEKDISLLR). Residues 9-27 (HADEKKNILEKESLQNDET) are compositionally biased toward basic and acidic residues. The chain crosses the membrane as a helical span at residues 40 to 60 (PAHWNFIGLFFLVLIIGTTFL). Residues 61–374 (HKCLPEPKDP…KPAEYADRKT (314 aa)) lie on the Lumenal side of the membrane. N156 carries an N-linked (GlcNAc...) asparagine glycan. H180 and D192 together coordinate Zn(2+). E226 serves as the catalytic Proton acceptor. Positions 227, 253, and 329 each coordinate Zn(2+). The helical transmembrane segment at 375 to 395 (VFFDFLGLFVIIYPLSIAHLV) threads the bilayer. The Cytoplasmic segment spans residues 396–424 (NMLTICTVIALMSHRFYSKTFITFLALRD). Residues 425-445 (YVLTILTIALVLKAMTFMSLF) traverse the membrane as a helical segment. Topologically, residues 446–457 (TYGALRWYTRHW) are lumenal. The chain crosses the membrane as a helical span at residues 458–478 (LALVAYGLPSVWAGISVQGLL). Residues 479–489 (TARLAPKAREE) are Cytoplasmic-facing. The helical transmembrane segment at 490 to 512 (YGSTLELIHLTLISGILLAFTYY) threads the bilayer. At 513–515 (DIA) the chain is on the lumenal side. A helical transmembrane segment spans residues 516 to 538 (SGFLFALLLVPAIKSIITYFGAW). Residues 539–553 (PTCPTFNTILTLILS) lie on the Cytoplasmic side of the membrane. The chain crosses the membrane as a helical span at residues 554–574 (FPGCAMAIYTTEMLLSIFIPI). Residues 575-584 (MGRSSYNPEP) are Lumenal-facing. The helical transmembrane segment at 585–605 (AVSFFVAFSAGCIVLSLGGLV) threads the bilayer. The Cytoplasmic portion of the chain corresponds to 606 to 619 (AKSRNSRSSNEAGL). The helical transmembrane segment at 620 to 640 (LELIYNILGVLLVTLTILYVF) threads the bilayer. Topologically, residues 641–895 (SSFWPSPYRF…WNVDQVYKYF (255 aa)) are lumenal. N679 and N796 each carry an N-linked (GlcNAc...) asparagine glycan.

Belongs to the peptidase M28 family. It depends on Zn(2+) as a cofactor.

It localises to the endoplasmic reticulum membrane. The sequence is that of Putative endoplasmic reticulum metallopeptidase 1-B from Caenorhabditis elegans.